A 985-amino-acid chain; its full sequence is Probable beta-galactosidase C (985 aa).

The first 23 residues, Met1–Ala23, serve as a signal peptide directing secretion. The substrate site is built by Tyr82, Asn127, Ala128, Glu129, and Asn187. The active-site Proton donor is Glu188. Tyr251 serves as a coordination point for substrate. A disulfide bridge links Cys257 with Cys304. An N-linked (GlcNAc...) asparagine glycan is attached at Asn276. The Nucleophile role is filled by Glu287. Substrate is bound at residue Tyr353. Residues Asn391, Asn434, Asn517, Asn602, Asn677, Asn715, Asn720, and Asn759 are each glycosylated (N-linked (GlcNAc...) asparagine).

The protein belongs to the glycosyl hydrolase 35 family.

Its subcellular location is the secreted. The catalysed reaction is Hydrolysis of terminal non-reducing beta-D-galactose residues in beta-D-galactosides.. Its function is as follows. Cleaves beta-linked terminal galactosyl residues from gangliosides, glycoproteins, and glycosaminoglycans. This chain is Probable beta-galactosidase C (lacC), found in Aspergillus clavatus (strain ATCC 1007 / CBS 513.65 / DSM 816 / NCTC 3887 / NRRL 1 / QM 1276 / 107).